The following is a 123-amino-acid chain: Small ribosomal subunit protein uS12 (123 aa).

Position 89 is a 3-methylthioaspartic acid (Asp89).

It belongs to the universal ribosomal protein uS12 family. As to quaternary structure, part of the 30S ribosomal subunit. Contacts proteins S8 and S17. May interact with IF1 in the 30S initiation complex.

In terms of biological role, with S4 and S5 plays an important role in translational accuracy. Functionally, interacts with and stabilizes bases of the 16S rRNA that are involved in tRNA selection in the A site and with the mRNA backbone. Located at the interface of the 30S and 50S subunits, it traverses the body of the 30S subunit contacting proteins on the other side and probably holding the rRNA structure together. The combined cluster of proteins S8, S12 and S17 appears to hold together the shoulder and platform of the 30S subunit. The sequence is that of Small ribosomal subunit protein uS12 from Rhizobium leguminosarum bv. trifolii (strain WSM2304).